Reading from the N-terminus, the 339-residue chain is Uroporphyrinogen decarboxylase (339 aa).

Substrate is bound by residues 23 to 27 (RQAGR), aspartate 72, tyrosine 147, threonine 202, and histidine 315.

Belongs to the uroporphyrinogen decarboxylase family. Homodimer.

The protein resides in the cytoplasm. The enzyme catalyses uroporphyrinogen III + 4 H(+) = coproporphyrinogen III + 4 CO2. Its pathway is porphyrin-containing compound metabolism; protoporphyrin-IX biosynthesis; coproporphyrinogen-III from 5-aminolevulinate: step 4/4. Catalyzes the decarboxylation of four acetate groups of uroporphyrinogen-III to yield coproporphyrinogen-III. This chain is Uroporphyrinogen decarboxylase, found in Geotalea daltonii (strain DSM 22248 / JCM 15807 / FRC-32) (Geobacter daltonii).